The primary structure comprises 244 residues: Large ribosomal subunit protein uL3 (244 aa).

The protein belongs to the universal ribosomal protein uL3 family. Part of the 50S ribosomal subunit. Forms a cluster with proteins L14 and L19.

Functionally, one of the primary rRNA binding proteins, it binds directly near the 3'-end of the 23S rRNA, where it nucleates assembly of the 50S subunit. This Aquifex pyrophilus protein is Large ribosomal subunit protein uL3.